A 216-amino-acid polypeptide reads, in one-letter code: Phosphoenolpyruvate guanylyltransferase (216 aa).

The phosphoenolpyruvate site is built by threonine 139, glycine 155, and serine 158.

It belongs to the CofC family.

It catalyses the reaction phosphoenolpyruvate + GTP + H(+) = enolpyruvoyl-2-diphospho-5'-guanosine + diphosphate. It participates in cofactor biosynthesis; coenzyme F420 biosynthesis. Guanylyltransferase that catalyzes the activation of phosphoenolpyruvate (PEP) as enolpyruvoyl-2-diphospho-5'-guanosine, via the condensation of PEP with GTP. It is involved in the biosynthesis of coenzyme F420, a hydride carrier cofactor. The chain is Phosphoenolpyruvate guanylyltransferase from Streptomyces avermitilis (strain ATCC 31267 / DSM 46492 / JCM 5070 / NBRC 14893 / NCIMB 12804 / NRRL 8165 / MA-4680).